Here is a 122-residue protein sequence, read N- to C-terminus: Large ribosomal subunit protein uL14 (122 aa).

It belongs to the universal ribosomal protein uL14 family. Part of the 50S ribosomal subunit. Forms a cluster with proteins L3 and L19. In the 70S ribosome, L14 and L19 interact and together make contacts with the 16S rRNA in bridges B5 and B8.

Functionally, binds to 23S rRNA. Forms part of two intersubunit bridges in the 70S ribosome. The polypeptide is Large ribosomal subunit protein uL14 (Leuconostoc citreum (strain KM20)).